The sequence spans 149 residues: SPbeta prophage-derived putative transcriptional regulator YosT (149 aa).

This Bacillus subtilis (strain 168) protein is SPbeta prophage-derived putative transcriptional regulator YosT (yosT).